Reading from the N-terminus, the 89-residue chain is Cell division topological specificity factor (89 aa).

The protein belongs to the MinE family.

Functionally, prevents the cell division inhibition by proteins MinC and MinD at internal division sites while permitting inhibition at polar sites. This ensures cell division at the proper site by restricting the formation of a division septum at the midpoint of the long axis of the cell. The sequence is that of Cell division topological specificity factor from Legionella pneumophila (strain Paris).